A 326-amino-acid polypeptide reads, in one-letter code: AA10 family lytic polysaccharide monooxygenase C (326 aa).

The N-terminal stretch at 1–32 (MVFSNSNASVSLFRLVALVATLSHLVFTFVDA) is a signal peptide. Cu(2+)-binding residues include His33 and His118. Positions 33 to 200 (HGYVTFPASR…ANAFYQCLDL (168 aa)) constitute a Chitin-binding type-4 domain. An intrachain disulfide couples Cys81 to Cys197. N-linked (GlcNAc...) asparagine glycans are attached at residues Asn206, Asn215, Asn266, and Asn303. Residues 206-326 (NSSSSSSSSN…KSQMRRDRQG (121 aa)) form a disordered region. Low complexity predominate over residues 207–281 (SSSSSSSSNS…NNGGSSGSTT (75 aa)).

It belongs to the polysaccharide monooxygenase AA10 family. It depends on Cu(2+) as a cofactor.

It localises to the secreted. Lytic polysaccharide monooxygenase (LPMO) that oxidatively cleaves alpha- and beta-chitin with C1 regioselectivity. Catalysis by LPMOs requires the reduction of the active-site copper from Cu(II) to Cu(I) by a reducing agent and H(2)O(2) or O(2) as a cosubstrate. Exhibits enzymatic activity on U.maydis fungal cell wall chitin and Boosts chitin hydrolysis by chitinase GH18A. This chain is AA10 family lytic polysaccharide monooxygenase C, found in Mycosarcoma maydis (Corn smut fungus).